The chain runs to 225 residues: Rho GDP-dissociation inhibitor 3 (225 aa).

This sequence belongs to the Rho GDI family. Detected only in brain, lung, kidney and testis.

Its subcellular location is the cytoplasm. Functionally, inhibits GDP/GTP exchange reaction of RhoB. Interacts specifically with the GDP- and GTP-bound forms of post-translationally processed Rhob and Rhog proteins, both of which show a growth-regulated expression in mammalian cells. Stimulates the release of the GDP-bound but not the GTP-bound RhoB protein. Also inhibits the GDP/GTP exchange of RhoB but shows less ability to inhibit the dissociation of prebound GTP. In Mus musculus (Mouse), this protein is Rho GDP-dissociation inhibitor 3 (Arhgdig).